The primary structure comprises 73 residues: Translational regulator CsrA (73 aa).

It belongs to the CsrA/RsmA family. Homodimer; the beta-strands of each monomer intercalate to form a hydrophobic core, while the alpha-helices form wings that extend away from the core.

Its subcellular location is the cytoplasm. Its function is as follows. A translational regulator that binds mRNA to regulate translation initiation and/or mRNA stability. Usually binds in the 5'-UTR at or near the Shine-Dalgarno sequence preventing ribosome-binding, thus repressing translation. Its main target seems to be the major flagellin gene, while its function is anatagonized by FliW. This Lachnospira eligens (strain ATCC 27750 / DSM 3376 / VPI C15-48 / C15-B4) (Eubacterium eligens) protein is Translational regulator CsrA.